Here is a 314-residue protein sequence, read N- to C-terminus: Trihelix transcription factor ASR3 (314 aa).

The interval 1-34 (MALEQLGLGVSAVDGGENSSAPSNDGGDDGVKTA) is disordered. In terms of domain architecture, Myb-like spans 38–104 (RWTRQEILVL…QCRKRWSNLA (67 aa)). The short motif at 84 to 91 (CKRHGVNR) is the Nuclear localization signal element. Positions 161 to 165 (LSLGL) match the EAR 1 motif. The residue at position 189 (Thr189) is a Phosphothreonine; by MAPK4. A disordered region spans residues 207 to 255 (CVADQGRVKEKQPEAANVEGGSTSQEERKRKRTSFGEKEEEEEEGETKK). Positions 280–284 (LNLKL) match the EAR 2 motif.

Homodimer. Interacts directly with MPK4. Phosphorylated on Thr-189 by MPK4 in response to microbe-associated molecular patterns (MAMPs, e.g. flg22, elf18, chitin, and LPS). This phosphorylation enhances DNA-binding and thus negatively regulates immune gene expression.

The protein localises to the nucleus. Transcriptional repressor that binds DNA and plays a negative role in regulating microbe-associated molecular patterns-(MAMPs, e.g. flg22, elf18, chitin, and LPS) triggered immunity (PTI) by negatively regulating immune gene expression. The polypeptide is Trihelix transcription factor ASR3 (Arabidopsis thaliana (Mouse-ear cress)).